We begin with the raw amino-acid sequence, 110 residues long: Small ribosomal subunit protein uS10 (110 aa).

The protein belongs to the universal ribosomal protein uS10 family. Part of the 30S ribosomal subunit.

Involved in the binding of tRNA to the ribosomes. This chain is Small ribosomal subunit protein uS10, found in Coxiella burnetii (strain Dugway 5J108-111).